A 319-amino-acid polypeptide reads, in one-letter code: Probable carboxylesterase 5 (319 aa).

Methionine 1 bears the N-acetylmethionine mark. The Involved in the stabilization of the negatively charged intermediate by the formation of the oxyanion hole signature appears at 79–81 (HGG). Catalysis depends on residues serine 163, aspartate 262, and histidine 294.

The protein belongs to the 'GDXG' lipolytic enzyme family. In terms of tissue distribution, expressed in roots, leaves, stems, flowers and siliques.

The catalysed reaction is a carboxylic ester + H2O = an alcohol + a carboxylate + H(+). In terms of biological role, carboxylesterase acting on esters with varying acyl chain length. The chain is Probable carboxylesterase 5 (CXE5) from Arabidopsis thaliana (Mouse-ear cress).